Consider the following 412-residue polypeptide: Multifunctional CCA protein (412 aa).

ATP-binding residues include G8 and R11. CTP contacts are provided by G8 and R11. Positions 21 and 23 each coordinate Mg(2+). Residues R91, R137, and R140 each contribute to the ATP site. Residues R91, R137, and R140 each coordinate CTP. One can recognise an HD domain in the interval 228 to 329 (TGIHTLMTLS…VKLFDSIDAW (102 aa)).

Belongs to the tRNA nucleotidyltransferase/poly(A) polymerase family. Bacterial CCA-adding enzyme type 1 subfamily. As to quaternary structure, monomer. Can also form homodimers and oligomers. The cofactor is Mg(2+). Ni(2+) serves as cofactor.

The catalysed reaction is a tRNA precursor + 2 CTP + ATP = a tRNA with a 3' CCA end + 3 diphosphate. The enzyme catalyses a tRNA with a 3' CCA end + 2 CTP + ATP = a tRNA with a 3' CCACCA end + 3 diphosphate. Functionally, catalyzes the addition and repair of the essential 3'-terminal CCA sequence in tRNAs without using a nucleic acid template. Adds these three nucleotides in the order of C, C, and A to the tRNA nucleotide-73, using CTP and ATP as substrates and producing inorganic pyrophosphate. tRNA 3'-terminal CCA addition is required both for tRNA processing and repair. Also involved in tRNA surveillance by mediating tandem CCA addition to generate a CCACCA at the 3' terminus of unstable tRNAs. While stable tRNAs receive only 3'-terminal CCA, unstable tRNAs are marked with CCACCA and rapidly degraded. The protein is Multifunctional CCA protein of Escherichia coli O8 (strain IAI1).